A 297-amino-acid polypeptide reads, in one-letter code: UDP-N-acetylenolpyruvoylglucosamine reductase (297 aa).

The 174-residue stretch at 22–195 folds into the FAD-binding PCMH-type domain; sequence RAGGTARYYA…LAGRFRLQRG (174 aa). Arg169 is an active-site residue. Ser223 serves as the catalytic Proton donor. The active site involves Glu293.

Belongs to the MurB family. Requires FAD as cofactor.

The protein resides in the cytoplasm. The catalysed reaction is UDP-N-acetyl-alpha-D-muramate + NADP(+) = UDP-N-acetyl-3-O-(1-carboxyvinyl)-alpha-D-glucosamine + NADPH + H(+). The protein operates within cell wall biogenesis; peptidoglycan biosynthesis. Cell wall formation. This is UDP-N-acetylenolpyruvoylglucosamine reductase from Chloroflexus aurantiacus (strain ATCC 29364 / DSM 637 / Y-400-fl).